Here is a 652-residue protein sequence, read N- to C-terminus: Phosphatidylinositol-binding clathrin assembly protein (652 aa).

N-acetylserine is present on serine 2. One can recognise an ENTH domain in the interval 14–145 (QHSVTGSAVS…VSYRQVAFDF (132 aa)). Serine 16 and serine 20 each carry phosphoserine. An interaction with PIMREG region spans residues 221 to 294 (KYFDMKKNQC…LEGKKIKDST (74 aa)). Lysine 238 is covalently cross-linked (Glycyl lysine isopeptide (Lys-Gly) (interchain with G-Cter in SUMO2)). Phosphoserine is present on residues serine 303 and serine 315. Positions 559 to 580 (KNDVNWSQPGEKKLTGGSNWQP) are disordered.

It belongs to the PICALM/SNAP91 family. Binds to clathrin; involves primarily the C-terminal sequences, but the full-length protein is required for full binding capacity. Binds phosphatidylinositol 4,5- bisphosphate. Interacts with PIMREG; this interaction may change the subcellular location into the nucleus. Interacts with AP2A1 (via its alpha-appendage domain). Interacts (via N-terminus) with VAMP2; VAMP3; VAMP7 and VAMP8 (Via N-terminus). Interacts with LC3/MAP1LC3A. In terms of tissue distribution, expressed in all tissues examined.

The protein resides in the cell membrane. It localises to the membrane. The protein localises to the clathrin-coated pit. Its subcellular location is the golgi apparatus. It is found in the cytoplasmic vesicle. The protein resides in the clathrin-coated vesicle. It localises to the nucleus. Functionally, cytoplasmic adapter protein that plays a critical role in clathrin-mediated endocytosis which is important in processes such as internalization of cell receptors, synaptic transmission or removal of apoptotic cells. Recruits AP-2 and attaches clathrin triskelions to the cytoplasmic side of plasma membrane leading to clathrin-coated vesicles (CCVs) assembly. Furthermore, regulates clathrin-coated vesicle size and maturation by directly sensing and driving membrane curvature. In addition to binding to clathrin, mediates the endocytosis of small R-SNARES (Soluble NSF Attachment Protein REceptors) between plasma membranes and endosomes including VAMP2, VAMP3, VAMP4, VAMP7 or VAMP8. In turn, PICALM-dependent SNARE endocytosis is required for the formation and maturation of autophagic precursors. Modulates thereby autophagy and the turnover of autophagy substrates such as MAPT/TAU or amyloid precursor protein cleaved C-terminal fragment (APP-CTF). This chain is Phosphatidylinositol-binding clathrin assembly protein (PICALM), found in Homo sapiens (Human).